The chain runs to 284 residues: Tropomyosin alpha-1 chain (284 aa).

M1 is subject to N-acetylmethionine. Residues 1-38 are disordered; it reads MDAIKKKMQMLKLDKENALDRAEQAEADKKAAEDRSKQ. Residues 1–284 adopt a coiled-coil conformation; it reads MDAIKKKMQM…DHALNDMTSI (284 aa). The span at 12–38 shows a compositional bias: basic and acidic residues; the sequence is KLDKENALDRAEQAEADKKAAEDRSKQ. Phosphoserine is present on S45. Residues 116 to 136 are disordered; it reads AEKAADESERGMKVIESRAQK. A phosphoserine mark is found at S174, S186, S206, and S252. Position 261 is a phosphotyrosine (Y261). Phosphoserine is present on residues S271 and S283.

It belongs to the tropomyosin family. In terms of assembly, homodimer. Heterodimer of an alpha (TPM1, TPM3 or TPM4) and a beta (TPM2) chain. Interacts with HRG (via the HRR domain); the interaction contributes to the antiangiogenic properties of the histidine/proline-rich region (HRR) of HRG. Interacts (via N-terminus) with LMOD2 (via N-terminus) and TMOD1 (via N-terminus). In terms of processing, phosphorylated at Ser-283 by DAPK1 in response to oxidative stress and this phosphorylation enhances stress fiber formation in endothelial cells.

Its subcellular location is the cytoplasm. It is found in the cytoskeleton. Functionally, binds to actin filaments in muscle and non-muscle cells. Plays a central role, in association with the troponin complex, in the calcium dependent regulation of vertebrate striated muscle contraction. Smooth muscle contraction is regulated by interaction with caldesmon. In non-muscle cells is implicated in stabilizing cytoskeleton actin filaments. This is Tropomyosin alpha-1 chain (Tpm1) from Mus musculus (Mouse).